A 658-amino-acid polypeptide reads, in one-letter code: Serine/threonine-protein kinase shk1/pak1 (658 aa).

4 disordered regions span residues 1–21 (MERG…ITPI), 39–104 (RKLK…SYDE), 126–147 (GGSS…STVI), and 213–365 (GAKP…QQSN). A compositionally biased stretch (polar residues) spans 66–98 (PLSQSRTTVSRVSLGSRQHSSSSIRKLQTNVSD). Residues 129–140 (SPTSSYGSGSAS) are compositionally biased toward low complexity. In terms of domain architecture, CRIB spans 147–160 (ISSPFDPKHVTHVG). Composition is skewed to low complexity over residues 226–254 (PLLS…LYPS) and 262–272 (ASSSSSPLLSS). Positions 273–300 (QTVKTTTSNASRQPSPLVSSKSTDNIIR) are enriched in polar residues. Residues serine 301 and serine 303 each carry the phosphoserine modification. The region spanning 386-637 (YRNFVKIGQG…SGELLRHPFL (252 aa)) is the Protein kinase domain. ATP contacts are provided by residues 392 to 400 (IGQGASGDV) and lysine 415. Aspartate 505 (proton acceptor) is an active-site residue.

This sequence belongs to the protein kinase superfamily. STE Ser/Thr protein kinase family. STE20 subfamily. In terms of assembly, forms an activated complex with GTP-bound ras-like cdc42. Interacts with skb1 and the SH3 domain of skb5 via its amino-terminal regulatory domain. Skb1, cdc42 and shk1 are able to form a ternary complex in vivo. Interacts with rga8 and may interact with byr2. In terms of processing, autophosphorylated on serine residues.

The protein localises to the cytoplasm. The protein resides in the cytoskeleton. It is found in the spindle. The catalysed reaction is L-seryl-[protein] + ATP = O-phospho-L-seryl-[protein] + ADP + H(+). It catalyses the reaction L-threonyl-[protein] + ATP = O-phospho-L-threonyl-[protein] + ADP + H(+). MAP4K component of the MAPK pathway required for the mating pheromone response. Phosphorylates histone H2B to form H2BS10ph. Phosphorylates tea1. Required for skb1-dependent mitotic inhibitory function. Regulates microtubule dynamics and cell polarity. In Schizosaccharomyces pombe (strain 972 / ATCC 24843) (Fission yeast), this protein is Serine/threonine-protein kinase shk1/pak1 (shk1).